A 285-amino-acid polypeptide reads, in one-letter code: NAD kinase (285 aa).

The active-site Proton acceptor is the aspartate 68. NAD(+)-binding positions include 68–69 (DG), 142–143 (ND), arginine 153, arginine 170, aspartate 172, and glutamine 242.

Belongs to the NAD kinase family. A divalent metal cation serves as cofactor.

The protein localises to the cytoplasm. It carries out the reaction NAD(+) + ATP = ADP + NADP(+) + H(+). In terms of biological role, involved in the regulation of the intracellular balance of NAD and NADP, and is a key enzyme in the biosynthesis of NADP. Catalyzes specifically the phosphorylation on 2'-hydroxyl of the adenosine moiety of NAD to yield NADP. The chain is NAD kinase from Acidobacterium capsulatum (strain ATCC 51196 / DSM 11244 / BCRC 80197 / JCM 7670 / NBRC 15755 / NCIMB 13165 / 161).